Consider the following 164-residue polypeptide: Phospholipase A and acyltransferase 4 (164 aa).

The interval 1–40 is essential for its ability regulate keratinocyte differentiation; it reads MASPHQEPKPGDLIEIFRLGYEHWALYIGDGYVIHLAPPS. Topologically, residues 1 to 134 are cytoplasmic; sequence MASPHQEPKP…SRCKQVEKAK (134 aa). The 117-residue stretch at 13–129 folds into the LRAT domain; sequence LIEIFRLGYE…LRYGKSRCKQ (117 aa). Active-site residues include H23 and H35. C113 acts as the Acyl-thioester intermediate in catalysis. An interaction with TGM1 region spans residues 124-164; the sequence is KSRCKQVEKAKVEVGVATALGILVVAGCSFAIRRYQKKATA. The helical transmembrane segment at 135–155 threads the bilayer; the sequence is VEVGVATALGILVVAGCSFAI. The Lumenal portion of the chain corresponds to 156–164; sequence RRYQKKATA.

It belongs to the H-rev107 family. As to quaternary structure, interacts with TGM1. Widely expressed.

The protein resides in the membrane. The enzyme catalyses a 1,2-diacyl-sn-glycero-3-phosphocholine + H2O = a 1-acyl-sn-glycero-3-phosphocholine + a fatty acid + H(+). The catalysed reaction is a 1,2-diacyl-sn-glycero-3-phosphocholine + H2O = a 2-acyl-sn-glycero-3-phosphocholine + a fatty acid + H(+). It catalyses the reaction 1,2-dihexadecanoyl-sn-glycero-3-phosphocholine + H2O = 1-hexadecanoyl-sn-glycero-3-phosphocholine + hexadecanoate + H(+). It carries out the reaction 1,2-dihexadecanoyl-sn-glycero-3-phosphocholine + H2O = 2-hexadecanoyl-sn-glycero-3-phosphocholine + hexadecanoate + H(+). The enzyme catalyses 1-hexadecanoyl-2-(9Z-octadecenoyl)-sn-glycero-3-phosphocholine + H2O = 2-(9Z-octadecenoyl)-sn-glycero-3-phosphocholine + hexadecanoate + H(+). The catalysed reaction is 1-hexadecanoyl-2-(9Z-octadecenoyl)-sn-glycero-3-phosphocholine + H2O = 1-hexadecanoyl-sn-glycero-3-phosphocholine + (9Z)-octadecenoate + H(+). It catalyses the reaction 1-hexadecanoyl-2-(5Z,8Z,11Z,14Z-eicosatetraenoyl)-sn-glycero-3-phosphocholine + H2O = 2-(5Z,8Z,11Z,14Z)-eicosatetraenoyl-sn-glycero-3-phosphocholine + hexadecanoate + H(+). It carries out the reaction 1-hexadecanoyl-2-(9Z,12Z-octadecadienoyl)-sn-glycero-3-phosphoethanolamine + H2O = 1-hexadecanoyl-sn-glycero-3-phosphoethanolamine + (9Z,12Z)-octadecadienoate + H(+). The enzyme catalyses 1-hexadecanoyl-2-(9Z,12Z-octadecadienoyl)-sn-glycero-3-phosphoethanolamine + H2O = 2-(9Z,12Z)-octadecadienoyl-sn-glycero-3-phosphoethanolamine + hexadecanoate + H(+). The catalysed reaction is 1-hexadecanoyl-2-(5Z,8Z,11Z,14Z-eicosatetraenoyl)-sn-glycero-3-phosphoethanolamine + H2O = 2-(5Z,8Z,11Z,14Z)-eicosatetraenoyl-sn-glycero-3-phosphoethanolamine + hexadecanoate + H(+). It catalyses the reaction 1-hexanoyl-2-acyl-sn-glycero-3-phosphocholine + H2O = hexanoate + a 2-acyl-sn-glycero-3-phosphocholine + H(+). It carries out the reaction 1,2-diheptadecanoyl-sn-glycero-3-phosphoethanolamine + 1-(9Z-octadecenoyl)-2-hexadecanoyl-sn-glycero-3-phosphocholine = 1,2-diheptadecanoyl-sn-glycero-3-phospho-N-hexadecanoyl-ethanolamine + 1-(9Z-octadecenoyl)-sn-glycero-3-phosphocholine + H(+). The enzyme catalyses 1,2-diheptadecanoyl-sn-glycero-3-phosphoethanolamine + 1-(9Z-octadecenoyl)-2-hexadecanoyl-sn-glycero-3-phosphocholine = 1,2-diheptadecanoyl-sn-glycero-3-phospho-N-(9Z-octadecenoyl)-ethanolamine + 2-hexadecanoyl-sn-glycero-3-phosphocholine + H(+). Its function is as follows. Exhibits both phospholipase A1/2 and acyltransferase activities. Shows phospholipase A1 (PLA1) and A2 (PLA2), catalyzing the calcium-independent release of fatty acids from the sn-1 or sn-2 position of glycerophospholipids. For most substrates, PLA1 activity is much higher than PLA2 activity. Shows O-acyltransferase activity, catalyzing the transfer of a fatty acyl group from glycerophospholipid to the hydroxyl group of lysophospholipid. Shows N-acyltransferase activity, catalyzing the calcium-independent transfer of a fatty acyl group at the sn-1 position of phosphatidylcholine (PC) and other glycerophospholipids to the primary amine of phosphatidylethanolamine (PE), forming N-acylphosphatidylethanolamine (NAPE), which serves as precursor for N-acylethanolamines (NAEs). Promotes keratinocyte differentiation via activation of TGM1. The sequence is that of Phospholipase A and acyltransferase 4 from Homo sapiens (Human).